A 198-amino-acid polypeptide reads, in one-letter code: Putative pseudouridine methyltransferase (198 aa).

Residues Met-132 and Cys-186 each coordinate S-adenosyl-L-methionine.

This sequence belongs to the methyltransferase superfamily. TrmY family.

Its subcellular location is the cytoplasm. In Shewanella baltica (strain OS223), this protein is Putative pseudouridine methyltransferase.